Here is a 436-residue protein sequence, read N- to C-terminus: Hydrogenobyrinate a,c-diamide synthase (436 aa).

A GATase cobBQ-type domain is found at 244-435 (RIAVARDDAF…MHVIDFSGEA (192 aa)). Cys327 (nucleophile) is an active-site residue.

Belongs to the CobB/CbiA family. Requires Mg(2+) as cofactor.

The catalysed reaction is hydrogenobyrinate + 2 L-glutamine + 2 ATP + 2 H2O = hydrogenobyrinate a,c-diamide + 2 L-glutamate + 2 ADP + 2 phosphate + 2 H(+). It functions in the pathway cofactor biosynthesis; adenosylcobalamin biosynthesis; cob(II)yrinate a,c-diamide from precorrin-2 (aerobic route): step 9/10. Its function is as follows. Catalyzes the ATP-dependent amidation of the two carboxylate groups at positions a and c of hydrogenobyrinate, using either L-glutamine or ammonia as the nitrogen source. In Brucella ovis (strain ATCC 25840 / 63/290 / NCTC 10512), this protein is Hydrogenobyrinate a,c-diamide synthase.